Reading from the N-terminus, the 179-residue chain is Putative 5'(3')-deoxyribonucleotidase (179 aa).

The active-site Nucleophile is Asp-9. Asp-9, Asp-11, and Asp-135 together coordinate Mg(2+). Asp-11 (proton donor) is an active-site residue.

It belongs to the 5'(3')-deoxyribonucleotidase family. Mg(2+) serves as cofactor.

In terms of biological role, dephosphorylates the 5' and 2'(3')-phosphates of deoxyribonucleotides. The protein is Putative 5'(3')-deoxyribonucleotidase of Staphylococcus epidermidis (strain ATCC 12228 / FDA PCI 1200).